Here is a 183-residue protein sequence, read N- to C-terminus: Peptide methionine sulfoxide reductase MsrA 1 (183 aa).

Residue cysteine 12 is part of the active site.

Belongs to the MsrA Met sulfoxide reductase family.

It catalyses the reaction L-methionyl-[protein] + [thioredoxin]-disulfide + H2O = L-methionyl-(S)-S-oxide-[protein] + [thioredoxin]-dithiol. The enzyme catalyses [thioredoxin]-disulfide + L-methionine + H2O = L-methionine (S)-S-oxide + [thioredoxin]-dithiol. Has an important function as a repair enzyme for proteins that have been inactivated by oxidation. Catalyzes the reversible oxidation-reduction of methionine sulfoxide in proteins to methionine. The protein is Peptide methionine sulfoxide reductase MsrA 1 (msrA1) of Lactococcus lactis subsp. lactis (strain IL1403) (Streptococcus lactis).